A 1069-amino-acid polypeptide reads, in one-letter code: Kinesin-like protein vab-8 (1069 aa).

A Kinesin motor domain is found at 15 to 325 (PLRTIPKLRL…ACKIARTRVK (311 aa)). 3 disordered regions span residues 328–374 (MGHG…LESG), 391–436 (SRTT…KSSP), and 572–598 (EQEE…RILS). Interaction with unc-51 stretches follow at residues 331–517 (GRKP…KSKY) and 517–719 (YNLD…TVVD). 2 stretches are compositionally biased toward low complexity: residues 339-364 (SSGT…GTPR) and 391-407 (SRTT…TPTS). Positions 403 to 877 (STPTSIRPLH…SAERDRKTSK (475 aa)) are interaction with unc-73. Residues 719-769 (DWSQIERKKEREKDAMEEEKRKEVLRERRAKLKITELEIKRERNMIDKELD) are a coiled coil. Residues 786–960 (SLSPCRGGRT…RQSYSASSGY (175 aa)) form a disordered region. The segment covering 824 to 847 (GGSLAKLSASGASGSGPPSSPSLG) has biased composition (low complexity). Over residues 883–897 (SSKERRSSGSKEELQ) the composition is skewed to basic and acidic residues. Positions 906–928 (TSPKTYGGPGTSSSGRGSSAPGS) are enriched in low complexity. Positions 938–960 (TEKTANGTMPRSKRQSYSASSGY) are enriched in polar residues. Residues 990 to 1027 (LVRQADEIRHRQWQLKKELEEAKRAIGQEEDAKMIANS) are a coiled coil.

Belongs to the TRAFAC class myosin-kinesin ATPase superfamily. Kinesin family. KIF26 subfamily. In terms of assembly, interacts with unc-51 and unc-73. Phosphorylated by unc-51.

The protein resides in the cytoplasm. Its subcellular location is the cytoskeleton. Required for posterior migration of cells and axon growth cones during nervous system assembly. In PLM neuron, regulates innexin unc-9 gap junction turnover by suppressing unc-9 transport out of the gap junctions. In Caenorhabditis briggsae, this protein is Kinesin-like protein vab-8 (vab-8).